The chain runs to 707 residues: Leucine-rich repeat neuronal protein 3 (707 aa).

A signal peptide spans 1 to 22; the sequence is MKDTPLQVHVLLGLAITTLVQA. An LRRNT domain is found at 23–69; that stretch reads IDKKVDCPQLCTCEIRPWFTPRSIYMEASTVDCNDLGLLNFPARLPA. Topologically, residues 23–626 are extracellular; it reads IDKKVDCPQL…DGKEYGKNHT (604 aa). LRR repeat units follow at residues 70–91, 93–114, 117–138, 141–162, 165–186, 189–210, 213–234, 237–258, 261–282, 285–304, 310–332, and 335–358; these read DTQILLLQTNNIARIEHSTDFP, NLTGLDLSQNNLSSVTNINVQK, QLLSVYLEENKLTELPEKCLYG, NLQELYVNHNLLSTISPGAFIG, NLLRLHLNSNRLQMINSQWFDA, NLEILMLGDNPIIRIKDMNFQP, KLRSLVIAGINLTEIPDDALAG, NLESISFYDNRLSKVPQVALQK, NLKFLDLNKNPINRIRRGDFSN, HLKELGINNMPELVSIDSLA, DLRKIEATNNPRLSYIHPNAFFR, and KLESLMLNTNALSALYHGTIESLP. 2 N-linked (GlcNAc...) asparagine glycosylation sites follow: N93 and N103. N223 carries an N-linked (GlcNAc...) asparagine glycan. The LRRCT domain occupies 368–421; the sequence is NPIRCDCVIRWINMNKTNIRFMEPDSLFCVDPPEFQGQNVRQVHFRDMMEICLP. N382 is a glycosylation site (N-linked (GlcNAc...) asparagine). Residues 421–514 form the Ig-like C2-type domain; sequence PLIAPESFPS…DLKSIMIKVG (94 aa). C444 and C496 are oxidised to a cystine. N-linked (GlcNAc...) asparagine glycans are attached at residues N522, N579, N608, and N624. One can recognise a Fibronectin type-III domain in the interval 523–614; that stretch reads GSLNIKIRDI…QCVNVTTKSL (92 aa). The helical transmembrane segment at 627–647 threads the bilayer; it reads VFVACVGGLLGIIGVMCLFSC. Residues 648 to 707 are Cytoplasmic-facing; that stretch reads VSQEGSSEGEHSYAVNHCHKPALAFSELYPPLINLWESSKEKRATLEVKATAIGVPTNMS.

As to expression, expressed in the brain, in Stronger expression in the ventricular zone and anlage of thalamus, spinal cord, and dorsal root ganglion in 11-17 dpc cerebellum and cerebral cortex in adults.

The protein localises to the membrane. The protein is Leucine-rich repeat neuronal protein 3 (Lrrn3) of Mus musculus (Mouse).